A 364-amino-acid chain; its full sequence is DNA replication and repair protein RecF (364 aa).

30–37 contributes to the ATP binding site; it reads GANGSGKT.

The protein belongs to the RecF family.

The protein resides in the cytoplasm. The RecF protein is involved in DNA metabolism; it is required for DNA replication and normal SOS inducibility. RecF binds preferentially to single-stranded, linear DNA. It also seems to bind ATP. The chain is DNA replication and repair protein RecF from Sodalis glossinidius.